A 295-amino-acid chain; its full sequence is Probable ketoamine kinase slr1563 (295 aa).

99-101 contributes to the ATP binding site; sequence EWL. Aspartate 201 serves as the catalytic Proton acceptor.

This sequence belongs to the fructosamine kinase family.

Functionally, ketoamine kinase that phosphorylates ketoamines on the third carbon of the sugar moiety to generate ketoamine 3-phosphate. The chain is Probable ketoamine kinase slr1563 from Synechocystis sp. (strain ATCC 27184 / PCC 6803 / Kazusa).